The chain runs to 471 residues: Ribulose bisphosphate carboxylase large chain (471 aa).

N6,N6,N6-trimethyllysine is present on lysine 5. Residues asparagine 114 and threonine 164 each coordinate substrate. Lysine 166 (proton acceptor) is an active-site residue. A substrate-binding site is contributed by lysine 168. The Mg(2+) site is built by lysine 192, aspartate 194, and glutamate 195. An N6-carboxylysine modification is found at lysine 192. Histidine 285 functions as the Proton acceptor in the catalytic mechanism. Positions 286, 318, and 370 each coordinate substrate.

The protein belongs to the RuBisCO large chain family. Type I subfamily. In terms of assembly, heterohexadecamer of 8 large chains and 8 small chains; disulfide-linked. The disulfide link is formed within the large subunit homodimers. Mg(2+) serves as cofactor. The disulfide bond which can form in the large chain dimeric partners within the hexadecamer appears to be associated with oxidative stress and protein turnover.

The protein localises to the plastid. It is found in the chloroplast. It catalyses the reaction 2 (2R)-3-phosphoglycerate + 2 H(+) = D-ribulose 1,5-bisphosphate + CO2 + H2O. The catalysed reaction is D-ribulose 1,5-bisphosphate + O2 = 2-phosphoglycolate + (2R)-3-phosphoglycerate + 2 H(+). Its function is as follows. RuBisCO catalyzes two reactions: the carboxylation of D-ribulose 1,5-bisphosphate, the primary event in carbon dioxide fixation, as well as the oxidative fragmentation of the pentose substrate in the photorespiration process. Both reactions occur simultaneously and in competition at the same active site. The sequence is that of Ribulose bisphosphate carboxylase large chain from Strychnos nux-vomica (Poison nut).